The sequence spans 218 residues: Vacuolar protein-sorting-associated protein 37 homolog 2 (218 aa).

The interval 1–51 is disordered; the sequence is MFNFWGSKEQQQGQSRPSPEASATPWYSPSLVTSPSSSRPQTSGQIPSHVS. A compositionally biased stretch (polar residues) spans 8-17; that stretch reads KEQQQGQSRP. Over residues 28–40 the composition is skewed to low complexity; the sequence is SPSLVTSPSSSRP. The region spanning 137–218 is the VPS37 C-terminal domain; that stretch reads QEKLNELENQ…HLAAKTSSIG (82 aa).

The protein belongs to the VPS37 family. Component of the endosomal sorting required for transport complex I (ESCRT-I), composed of ELC, VPS28 and VPS37. Interacts with ELC.

It localises to the endosome. Functionally, component of the ESCRT-I complex (endosomal sorting complex required for transport I), a regulator of vesicular trafficking process. Required for the sorting of endocytic ubiquitinated cargos into multivesicular bodies (MVBs). This is Vacuolar protein-sorting-associated protein 37 homolog 2 (VPS37-2) from Arabidopsis thaliana (Mouse-ear cress).